The following is a 195-amino-acid chain: Small ribosomal subunit protein uS5 (195 aa).

The region spanning 22-85 is the S5 DRBM domain; sequence IVEKLVHINR…EEAKKSMIRV (64 aa). A disordered region spans residues 164 to 195; it reads QVAAKRGKKVSDVIGRRADGASAAQPAADAEG. The segment covering 172 to 182 has biased composition (basic and acidic residues); that stretch reads KVSDVIGRRAD. Low complexity predominate over residues 183 to 195; sequence GASAAQPAADAEG.

Belongs to the universal ribosomal protein uS5 family. Part of the 30S ribosomal subunit. Contacts proteins S4 and S8.

In terms of biological role, with S4 and S12 plays an important role in translational accuracy. Located at the back of the 30S subunit body where it stabilizes the conformation of the head with respect to the body. The sequence is that of Small ribosomal subunit protein uS5 from Phenylobacterium zucineum (strain HLK1).